We begin with the raw amino-acid sequence, 402 residues long: Endoplasmic reticulum junction formation protein lunapark-B (402 aa).

The Cytoplasmic portion of the chain corresponds to 1-45 (MGAIISRWKTKPSTVELLESLDKDIKDLEEFRAKNQRLLKLWVGR). A helical membrane pass occupies residues 46-66 (LLFYSSALYLLTCLCVYYLYF). Residues 67–77 (PQQWGARLITA) are Lumenal-facing. The chain crosses the membrane as a helical span at residues 78 to 98 (LPLLAFPALVLLLRKMLIFLF). The Cytoplasmic portion of the chain corresponds to 99–402 (SKRTERNNDK…EEQKKEDESN (304 aa)). The stretch at 100-128 (KRTERNNDKLEDLKTQKRKILEEVMETET) forms a coiled coil. Residues 142-240 (ESKKKAEAEA…PGPGSGMRPP (99 aa)) form a disordered region. Residues 205–222 (SASTPAGASQAETPQQMM) show a composition bias toward polar residues. A C4-type; plays a role in ER morphology zinc finger spans residues 276-301 (CQQCFSHNGMALKEEFEFVAFRCAYC). The segment at 311–402 (RPQAPRLPEF…EEQKKEDESN (92 aa)) is disordered. Positions 321-330 (SFERRLRSES) are enriched in basic and acidic residues. A compositionally biased stretch (acidic residues) spans 341–352 (TPEDSDAPEDDM). A compositionally biased stretch (basic and acidic residues) spans 385–402 (PHAEAEALEEQKKEDESN).

Belongs to the lunapark family. Homodimer; homodimerization requires the C4-type zinc finger motif and decreases during mitosis in a phosphorylation-dependent manner. Post-translationally, phosphorylated. Phosphorylation occurs during interphase. Phosphorylation also occurs during mitosis; these phosphorylations reduce both its homodimerization and the ER three-way tubular junction formation.

It is found in the endoplasmic reticulum membrane. Functionally, endoplasmic reticulum (ER)-shaping membrane protein that plays a role in determining ER morphology. Involved in the stabilization of nascent three-way ER tubular junctions within the ER network. May also play a role as a curvature-stabilizing protein within three-way ER tubular junction network. The sequence is that of Endoplasmic reticulum junction formation protein lunapark-B (lnpkb) from Danio rerio (Zebrafish).